We begin with the raw amino-acid sequence, 323 residues long: NADH-ubiquinone oxidoreductase chain 1 (323 aa).

A run of 8 helical transmembrane segments spans residues 9–29, 76–96, 107–127, 145–165, 175–195, 227–247, 258–278, and 298–318; these read ILNPLIYMVPVLLAVAFLTLI, LFVLPVLALTLALTLWAPMPM, ILFVLALSSLAVYSILGSGWA, ISYEVSLGLILLSVIIFSGGF, EATWLALPAWPLAAMWYISTL, LFFLAEYANILLMNTLSAVLF, EFTSLTLMTKAALLSMVFLWV, and FLPLTLALVIWHLSLSTACAG.

It belongs to the complex I subunit 1 family.

Its subcellular location is the mitochondrion inner membrane. It carries out the reaction a ubiquinone + NADH + 5 H(+)(in) = a ubiquinol + NAD(+) + 4 H(+)(out). Functionally, core subunit of the mitochondrial membrane respiratory chain NADH dehydrogenase (Complex I) that is believed to belong to the minimal assembly required for catalysis. Complex I functions in the transfer of electrons from NADH to the respiratory chain. The immediate electron acceptor for the enzyme is believed to be ubiquinone. This Gadus morhua (Atlantic cod) protein is NADH-ubiquinone oxidoreductase chain 1 (MT-ND1).